A 209-amino-acid chain; its full sequence is Large ribosomal subunit protein uL3 (209 aa).

A disordered region spans residues 133–153 (THGNSLSHRAPGSIGQNQTPG). Gln-150 is subject to N5-methylglutamine.

This sequence belongs to the universal ribosomal protein uL3 family. In terms of assembly, part of the 50S ribosomal subunit. Forms a cluster with proteins L14 and L19. Post-translationally, methylated by PrmB.

Functionally, one of the primary rRNA binding proteins, it binds directly near the 3'-end of the 23S rRNA, where it nucleates assembly of the 50S subunit. The protein is Large ribosomal subunit protein uL3 of Pectobacterium atrosepticum (strain SCRI 1043 / ATCC BAA-672) (Erwinia carotovora subsp. atroseptica).